Reading from the N-terminus, the 273-residue chain is Tyrosinase (273 aa).

Cu cation is bound by residues His38, His54, His63, His190, His194, and His216.

Belongs to the tyrosinase family. Cu(2+) serves as cofactor.

The enzyme catalyses 2 L-dopa + O2 = 2 L-dopaquinone + 2 H2O. It catalyses the reaction L-tyrosine + O2 = L-dopaquinone + H2O. Its function is as follows. This is a copper-containing oxidase that functions in the formation of pigments such as melanins and other polyphenolic compounds. In Streptomyces antibioticus, this protein is Tyrosinase (melC2).